The following is a 188-amino-acid chain: UPF0301 protein Tcr_1827 (188 aa).

It belongs to the UPF0301 (AlgH) family.

This Hydrogenovibrio crunogenus (strain DSM 25203 / XCL-2) (Thiomicrospira crunogena) protein is UPF0301 protein Tcr_1827.